The primary structure comprises 563 residues: Arginine--tRNA ligase (563 aa).

The 'HIGH' region motif lies at 121 to 131; the sequence is PNIAKPFSIGH.

The protein belongs to the class-I aminoacyl-tRNA synthetase family. Monomer.

It localises to the cytoplasm. The enzyme catalyses tRNA(Arg) + L-arginine + ATP = L-arginyl-tRNA(Arg) + AMP + diphosphate. The polypeptide is Arginine--tRNA ligase (Streptococcus pyogenes serotype M18 (strain MGAS8232)).